Here is a 345-residue protein sequence, read N- to C-terminus: Phosphate acyltransferase (345 aa).

Belongs to the PlsX family. Homodimer. Probably interacts with PlsY.

It localises to the cytoplasm. It carries out the reaction a fatty acyl-[ACP] + phosphate = an acyl phosphate + holo-[ACP]. It functions in the pathway lipid metabolism; phospholipid metabolism. Functionally, catalyzes the reversible formation of acyl-phosphate (acyl-PO(4)) from acyl-[acyl-carrier-protein] (acyl-ACP). This enzyme utilizes acyl-ACP as fatty acyl donor, but not acyl-CoA. This chain is Phosphate acyltransferase, found in Wolbachia pipientis subsp. Culex pipiens (strain wPip).